A 141-amino-acid chain; its full sequence is Large ribosomal subunit protein uL11 (141 aa).

This sequence belongs to the universal ribosomal protein uL11 family. As to quaternary structure, part of the ribosomal stalk of the 50S ribosomal subunit. Interacts with L10 and the large rRNA to form the base of the stalk. L10 forms an elongated spine to which L12 dimers bind in a sequential fashion forming a multimeric L10(L12)X complex. In terms of processing, one or more lysine residues are methylated.

Forms part of the ribosomal stalk which helps the ribosome interact with GTP-bound translation factors. In Prochlorococcus marinus (strain MIT 9313), this protein is Large ribosomal subunit protein uL11.